The chain runs to 122 residues: Large ribosomal subunit protein uL14 (122 aa).

The protein belongs to the universal ribosomal protein uL14 family. As to quaternary structure, part of the 50S ribosomal subunit. Forms a cluster with proteins L3 and L19. In the 70S ribosome, L14 and L19 interact and together make contacts with the 16S rRNA in bridges B5 and B8.

Binds to 23S rRNA. Forms part of two intersubunit bridges in the 70S ribosome. The protein is Large ribosomal subunit protein uL14 of Thermoanaerobacter pseudethanolicus (strain ATCC 33223 / 39E) (Clostridium thermohydrosulfuricum).